Here is a 138-residue protein sequence, read N- to C-terminus: Small ribosomal subunit protein uS11c (138 aa).

Residues 1 to 25 are disordered; that stretch reads MAKSIPRTGSRRNVRSGSRKSTRRI. Residues 9–25 are compositionally biased toward basic residues; it reads GSRRNVRSGSRKSTRRI.

It belongs to the universal ribosomal protein uS11 family. Part of the 30S ribosomal subunit.

The protein localises to the plastid. It is found in the chloroplast. The sequence is that of Small ribosomal subunit protein uS11c from Eucalyptus globulus subsp. globulus (Tasmanian blue gum).